We begin with the raw amino-acid sequence, 210 residues long: Proteasome subunit beta (210 aa).

Residues 1–9 (MDNDKHLKG) constitute a propeptide, removed in mature form; by autocatalysis. Thr10 acts as the Nucleophile in catalysis.

Belongs to the peptidase T1B family. As to quaternary structure, the 20S proteasome core is composed of 14 alpha and 14 beta subunits that assemble into four stacked heptameric rings, resulting in a barrel-shaped structure. The two inner rings, each composed of seven catalytic beta subunits, are sandwiched by two outer rings, each composed of seven alpha subunits. The catalytic chamber with the active sites is on the inside of the barrel. Has a gated structure, the ends of the cylinder being occluded by the N-termini of the alpha-subunits. Is capped at one or both ends by the proteasome regulatory ATPase, PAN.

It is found in the cytoplasm. The catalysed reaction is Cleavage of peptide bonds with very broad specificity.. The formation of the proteasomal ATPase PAN-20S proteasome complex, via the docking of the C-termini of PAN into the intersubunit pockets in the alpha-rings, triggers opening of the gate for substrate entry. Interconversion between the open-gate and close-gate conformations leads to a dynamic regulation of the 20S proteasome proteolysis activity. Component of the proteasome core, a large protease complex with broad specificity involved in protein degradation. The sequence is that of Proteasome subunit beta from Methanococcoides burtonii (strain DSM 6242 / NBRC 107633 / OCM 468 / ACE-M).